The following is a 130-amino-acid chain: Small ribosomal subunit protein uS8 (130 aa).

This sequence belongs to the universal ribosomal protein uS8 family. Part of the 30S ribosomal subunit. Contacts proteins S5 and S12.

Functionally, one of the primary rRNA binding proteins, it binds directly to 16S rRNA central domain where it helps coordinate assembly of the platform of the 30S subunit. The chain is Small ribosomal subunit protein uS8 from Neisseria meningitidis serogroup C (strain 053442).